Consider the following 271-residue polypeptide: MKIDIVSVFPEYFEVMNLSLMGKAQAKGLLEIKAHNLRDWTHDVHHSVDDTPVGGGAGMVMKPEVWSECLDELLGFSRPSDSSAPSGTPVLIFPNPSAPLFTQRDATELSHADHLLFGCGRYEGYDARIPDYYRSQGVDVREYSIGDYVLNGGEVAVSVMLEAITRLMPGFMGNPDSIVEESYTGEGALLEHRQYTKPAVWRGIAVPDVLLSGDHGKVDRFRRDEALARTAEIRPDLIAALDCKALDKADRKTLMALGWEVSAAHPRRLAD.

Residues Gly120 and 145–150 (IGDYVL) each bind S-adenosyl-L-methionine.

The protein belongs to the RNA methyltransferase TrmD family. Homodimer.

It is found in the cytoplasm. The catalysed reaction is guanosine(37) in tRNA + S-adenosyl-L-methionine = N(1)-methylguanosine(37) in tRNA + S-adenosyl-L-homocysteine + H(+). In terms of biological role, specifically methylates guanosine-37 in various tRNAs. The chain is tRNA (guanine-N(1)-)-methyltransferase from Bifidobacterium longum subsp. infantis (strain ATCC 15697 / DSM 20088 / JCM 1222 / NCTC 11817 / S12).